Consider the following 343-residue polypeptide: Proto-oncogene serine/threonine-protein kinase mos (343 aa).

Positions 63–339 constitute a Protein kinase domain; that stretch reads VCLMHRLGSG…LLQRDLKAFR (277 aa). ATP-binding positions include 69–77 and K90; that span reads LGSGGFGSV. D198 (proton acceptor) is an active-site residue.

The protein belongs to the protein kinase superfamily. Ser/Thr protein kinase family. In terms of assembly, interacts with MAP2K1/MEK1.

It is found in the cytoplasm. It catalyses the reaction L-seryl-[protein] + ATP = O-phospho-L-seryl-[protein] + ADP + H(+). The enzyme catalyses L-threonyl-[protein] + ATP = O-phospho-L-threonyl-[protein] + ADP + H(+). Serine/threonine kinase involved in the regulation of MAPK signaling. Is an activator of the ERK1/2 signaling cascade playing an essential role in the stimulation of oocyte maturation. The sequence is that of Proto-oncogene serine/threonine-protein kinase mos from Mus musculus (Mouse).